A 392-amino-acid chain; its full sequence is Selenide, water dikinase 1 (392 aa).

The active site involves cysteine 31. ATP-binding positions include lysine 32, 67 to 69 (GMD), aspartate 87, aspartate 110, and 161 to 164 (GGQT). Aspartate 69 contributes to the Mg(2+) binding site. Mg(2+) is bound at residue aspartate 110. Aspartate 265 is a Mg(2+) binding site.

The protein belongs to the selenophosphate synthase 1 family. Class II subfamily. Homodimer. Requires Mg(2+) as cofactor.

The protein resides in the cell membrane. Its subcellular location is the nucleus membrane. It catalyses the reaction hydrogenselenide + ATP + H2O = selenophosphate + AMP + phosphate + 2 H(+). Synthesizes selenophosphate from selenide and ATP. This Xenopus laevis (African clawed frog) protein is Selenide, water dikinase 1 (sephs1).